The primary structure comprises 255 residues: Ribonuclease HII (255 aa).

The 184-residue stretch at 72–255 (AIICGIDEVG…KSFEPIKSLL (184 aa)) folds into the RNase H type-2 domain. Positions 78, 79, and 170 each coordinate a divalent metal cation.

The protein belongs to the RNase HII family. Mn(2+) serves as cofactor. Mg(2+) is required as a cofactor.

The protein resides in the cytoplasm. The enzyme catalyses Endonucleolytic cleavage to 5'-phosphomonoester.. Its function is as follows. Endonuclease that specifically degrades the RNA of RNA-DNA hybrids. The polypeptide is Ribonuclease HII (Staphylococcus aureus (strain bovine RF122 / ET3-1)).